The following is a 345-amino-acid chain: Phosphoribosylformylglycinamidine cyclo-ligase (345 aa).

Belongs to the AIR synthase family.

The protein resides in the cytoplasm. The catalysed reaction is 2-formamido-N(1)-(5-O-phospho-beta-D-ribosyl)acetamidine + ATP = 5-amino-1-(5-phospho-beta-D-ribosyl)imidazole + ADP + phosphate + H(+). The protein operates within purine metabolism; IMP biosynthesis via de novo pathway; 5-amino-1-(5-phospho-D-ribosyl)imidazole from N(2)-formyl-N(1)-(5-phospho-D-ribosyl)glycinamide: step 2/2. This is Phosphoribosylformylglycinamidine cyclo-ligase from Escherichia coli O6:K15:H31 (strain 536 / UPEC).